Reading from the N-terminus, the 215-residue chain is S-crystallin 3 (215 aa).

In terms of domain architecture, GST N-terminal spans Pro-2 to Gly-80. Residues Ser-82–Phe-215 enclose the GST C-terminal domain.

It belongs to the GST superfamily. Lens.

S-crystallins are structural components of squids and octopi eye lens. Contains relatively little if any GST activity. The polypeptide is S-crystallin 3 (Enteroctopus dofleini (North Pacific giant octopus)).